Here is a 1043-residue protein sequence, read N- to C-terminus: Sucrose-phosphate synthase 1 (1043 aa).

A compositionally biased stretch (basic and acidic residues) spans 95-117; it reads EEKEAQRLAKRRLEREKGRREAT. The tract at residues 95–127 is disordered; it reads EEKEAQRLAKRRLEREKGRREATADMSEEFSEG. S121, S125, S152, and S155 each carry phosphoserine. Positions 670–693 are disordered; it reads PRHPQWQSDDGGDNSEPESPSDSL.

It belongs to the glycosyltransferase 1 family. Homodimer or homotetramer. Phosphorylated at Ser-152 upon sucrose supply. As to expression, expressed in seeds, stems, rosette leaves, flowers and siliques. Highly expressed in maturing nectaries.

The enzyme catalyses beta-D-fructose 6-phosphate + UDP-alpha-D-glucose = sucrose 6(F)-phosphate + UDP + H(+). It participates in glycan biosynthesis; sucrose biosynthesis; sucrose from D-fructose 6-phosphate and UDP-alpha-D-glucose: step 1/2. With respect to regulation, activity is regulated by phosphorylation and moderated by concentration of metabolites and light. Its function is as follows. Plays a major role in photosynthetic sucrose synthesis by catalyzing the rate-limiting step of sucrose biosynthesis from UDP-glucose and fructose- 6-phosphate. Involved in the regulation of carbon partitioning in the leaves of plants. May regulate the synthesis of sucrose and therefore play a major role as a limiting factor in the export of photoassimilates out of the leaf. Plays a role for sucrose availability that is essential for plant growth and fiber elongation. Required for nectar secretion. This chain is Sucrose-phosphate synthase 1 (SPS1), found in Arabidopsis thaliana (Mouse-ear cress).